The sequence spans 92 residues: C-C motif chemokine 4 (92 aa).

Positions 1 to 23 (MKLCVTVLSLLVLVAAFCSPALS) are cleaved as a signal peptide. Disulfide bonds link Cys-34/Cys-58 and Cys-35/Cys-74.

The protein belongs to the intercrine beta (chemokine CC) family. In terms of assembly, homodimer. Interacts with CCR5.

It localises to the secreted. Functionally, monokine with inflammatory and chemokinetic properties. The protein is C-C motif chemokine 4 (CCL4) of Canis lupus familiaris (Dog).